The primary structure comprises 468 residues: Probable soluble pyridine nucleotide transhydrogenase (468 aa).

33–42 lines the FAD pocket; the sequence is ERGRMLGGVC.

It belongs to the class-I pyridine nucleotide-disulfide oxidoreductase family. FAD serves as cofactor.

The protein resides in the cytoplasm. It catalyses the reaction NAD(+) + NADPH = NADH + NADP(+). Functionally, conversion of NADPH, generated by peripheral catabolic pathways, to NADH, which can enter the respiratory chain for energy generation. This chain is Probable soluble pyridine nucleotide transhydrogenase (sthA), found in Mycobacterium bovis (strain ATCC BAA-935 / AF2122/97).